Here is a 164-residue protein sequence, read N- to C-terminus: C-phycoerythrin alpha chain (164 aa).

C82 and C139 together coordinate (2R,3E)-phycoerythrobilin.

The protein belongs to the phycobiliprotein family. As to quaternary structure, heterodimer of an alpha and a beta chain. In terms of processing, contains two covalently linked bilin chromophores.

The protein localises to the cellular thylakoid membrane. In terms of biological role, light-harvesting photosynthetic bile pigment-protein from the phycobiliprotein complex. In Microchaete diplosiphon (Fremyella diplosiphon), this protein is C-phycoerythrin alpha chain (cpeA).